The following is a 485-amino-acid chain: NADH-quinone oxidoreductase subunit N (485 aa).

Helical transmembrane passes span 8 to 28 (LIAL…MLSI), 35 to 55 (FLNA…LWFV), 71 to 91 (GFAM…CTFA), 105 to 125 (FYLL…ANHL), 127 to 147 (SLFL…GYAF), 159 to 179 (YTIL…LVYA), 203 to 223 (LLAG…LVPF), 235 to 255 (PAPV…GVVM), 271 to 291 (VVLA…ALSQ), 297 to 317 (LLGY…IALQ), 326 to 346 (VGVY…VVSL), 373 to 393 (AAVM…LGFI), 408 to 430 (WWLV…RVAV), and 455 to 475 (IVVL…QPLI).

Belongs to the complex I subunit 2 family. As to quaternary structure, NDH-1 is composed of 13 different subunits. Subunits NuoA, H, J, K, L, M, N constitute the membrane sector of the complex.

It is found in the cell inner membrane. The enzyme catalyses a quinone + NADH + 5 H(+)(in) = a quinol + NAD(+) + 4 H(+)(out). Its function is as follows. NDH-1 shuttles electrons from NADH, via FMN and iron-sulfur (Fe-S) centers, to quinones in the respiratory chain. The immediate electron acceptor for the enzyme in this species is believed to be ubiquinone. Couples the redox reaction to proton translocation (for every two electrons transferred, four hydrogen ions are translocated across the cytoplasmic membrane), and thus conserves the redox energy in a proton gradient. This is NADH-quinone oxidoreductase subunit N from Shigella dysenteriae serotype 1 (strain Sd197).